The following is a 245-amino-acid chain: NAD-dependent protein deacetylase (245 aa).

One can recognise a Deacetylase sirtuin-type domain in the interval Met-1–Lys-245. The NAD(+) site is built by Ala-26, Thr-30, Phe-37, Arg-38, Gln-105, Ile-107, Asp-108, and His-123. Phe-37 provides a ligand contact to nicotinamide. Ile-107 and Asp-108 together coordinate nicotinamide. His-123 acts as the Proton acceptor in catalysis. Residues Cys-131, Cys-134, Cys-151, and Cys-154 each coordinate Zn(2+). Residues Thr-190, Ser-191, Asn-216, and Ile-234 each coordinate NAD(+).

It belongs to the sirtuin family. Class U subfamily. Requires Zn(2+) as cofactor.

The protein localises to the cytoplasm. It catalyses the reaction N(6)-acetyl-L-lysyl-[protein] + NAD(+) + H2O = 2''-O-acetyl-ADP-D-ribose + nicotinamide + L-lysyl-[protein]. In terms of biological role, NAD-dependent protein deacetylase which modulates the activities of several enzymes which are inactive in their acetylated form. The chain is NAD-dependent protein deacetylase from Bacillus cereus (strain ZK / E33L).